The primary structure comprises 497 residues: Casein kinase I isoform delta (497 aa).

Disordered regions lie at residues 1 to 58 (MATM…EEMN) and 86 to 109 (PIQQ…HPTQ). The span at 14–34 (WHNNTSTPMDTTEPATNSHNP) shows a compositional bias: polar residues. Over residues 88 to 105 (QQHQQPPLLQQAQPSQIP) the composition is skewed to low complexity. Residues 191-458 (FRLGRKIGSG…YLRNLFRTLF (268 aa)) enclose the Protein kinase domain. Residues 197–205 (IGSGSFGDI) and Lys-220 each bind ATP. Asp-310 acts as the Proton acceptor in catalysis.

The protein belongs to the protein kinase superfamily. CK1 Ser/Thr protein kinase family. Casein kinase I subfamily. In terms of assembly, monomer. As to expression, expressed throughout larval development and into the adult stage in both hypodermal seam cells and the hermaphrodite specific neuron.

It is found in the cytoplasm. It localises to the nucleus. The protein resides in the chromosome. The protein localises to the centromere. Its subcellular location is the cell junction. It is found in the adherens junction. It carries out the reaction L-seryl-[protein] + ATP = O-phospho-L-seryl-[protein] + ADP + H(+). It catalyses the reaction L-threonyl-[protein] + ATP = O-phospho-L-threonyl-[protein] + ADP + H(+). Its activity is regulated as follows. Exhibits substrate-dependent heparin activation. Its function is as follows. Essential serine/threonine-protein kinase that regulates diverse cellular growth and survival processes including Wnt signaling, DNA repair and circadian rhythms. Casein kinases are operationally defined by their preferential utilization of acidic proteins. Positively regulates the expression of components of the heterochronic pathway, which regulate developmental timing, such as the transcriptional repressor lin-42 and microRNAs such as let-7. Negatively regulates cell cycle exit and cell fusion to prevent the premature differentiation of hypodermal seam cells into adult cells. Plays a role in regulating axon branching and subsequently, the maturation of the nervous system, most likely by preventing the premature termination of transcripts for proteins such as Ankyrin/unc-44, which are required for maintaining the nervous system. May phosphorylate ssup-72 to promote nervous system maturation. The sequence is that of Casein kinase I isoform delta from Caenorhabditis elegans.